We begin with the raw amino-acid sequence, 478 residues long: Ninja-family protein 7 (478 aa).

3 disordered regions span residues 1–247 (MDDD…LTPG), 336–374 (SFTAKDKADQTGTKQVDDGKKPREAGASSSAHAEDEKKA), and 454–478 (DAPAQDNSATLPAFPAGNQATSAEN). Basic and acidic residues predominate over residues 23-35 (KARDAPLEPKAEP). Positions 169-179 (ISISTDDGSTG) are enriched in polar residues. A compositionally biased stretch (acidic residues) spans 180–189 (ENEDVAESEA). Residues 233 to 242 (SFSGSESSSG) show a composition bias toward low complexity. Positions 339 to 359 (AKDKADQTGTKQVDDGKKPRE) are enriched in basic and acidic residues.

The protein belongs to the Ninja family.

Its subcellular location is the nucleus. The chain is Ninja-family protein 7 from Zea mays (Maize).